A 1122-amino-acid chain; its full sequence is AP-4 complex subunit epsilon-1 (1122 aa).

Residue serine 699 is modified to Phosphoserine. 2 stretches are compositionally biased toward basic and acidic residues: residues 714–728 and 745–760; these read YLPK…KPEA and TTRK…STEE. Disordered stretches follow at residues 714–760 and 797–861; these read YLPK…STEE and SKLK…AEKL. The segment at 726–1122 is interaction with TEPSIN; it reads PEASHVPAEG…CHCQKVMQTS (397 aa). Residues 841–853 show a composition bias toward low complexity; the sequence is ELSSELFRSESLS. Residue serine 851 is modified to Phosphoserine.

It belongs to the adaptor complexes large subunit family. Adaptor protein complex 4 (AP-4) is a heterotetramer composed of two large adaptins (epsilon-type subunit AP4E1 and beta-type subunit AP4B1), a medium adaptin (mu-type subunit AP4M1) and a small adaptin (sigma-type AP4S1). Interacts with TEPSIN. Interacts with GRIA2; probably indirect it mediates the somatodendritic localization of GRIA2 in neurons.

The protein resides in the golgi apparatus. Its subcellular location is the trans-Golgi network membrane. Component of the adaptor protein complex 4 (AP-4). Adaptor protein complexes are vesicle coat components involved both in vesicle formation and cargo selection. They control the vesicular transport of proteins in different trafficking pathways. AP-4 forms a non clathrin-associated coat on vesicles departing the trans-Golgi network (TGN) and may be involved in the targeting of proteins from the trans-Golgi network (TGN) to the endosomal-lysosomal system. It is also involved in protein sorting to the basolateral membrane in epithelial cells and the proper asymmetric localization of somatodendritic proteins in neurons. AP-4 is involved in the recognition and binding of tyrosine-based sorting signals found in the cytoplasmic part of cargos, but may also recognize other types of sorting signal. This is AP-4 complex subunit epsilon-1 from Mus musculus (Mouse).